Reading from the N-terminus, the 227-residue chain is Germin-like protein subfamily T member 3 (227 aa).

The signal sequence occupies residues 1–26; the sequence is MAHISQISSFLSIVLIFLALCITLFT. Residues Cys-44 and Cys-59 are joined by a disulfide bond. A Cupin type-1 domain is found at 71-219; it reads SGLNTPLNTS…AFKADSKTIN (149 aa). A glycan (N-linked (GlcNAc...) asparagine) is linked at Asn-78. Mn(2+) contacts are provided by His-119, His-121, and Glu-126. A glycan (N-linked (GlcNAc...) asparagine) is linked at Asn-143. His-165 contributes to the Mn(2+) binding site.

The protein belongs to the germin family. In terms of assembly, oligomer (believed to be a pentamer but probably hexamer).

It is found in the secreted. The protein resides in the extracellular space. Its subcellular location is the apoplast. In terms of biological role, may play a role in plant defense. Probably has no oxalate oxidase activity even if the active site is conserved. This Arabidopsis thaliana (Mouse-ear cress) protein is Germin-like protein subfamily T member 3.